A 277-amino-acid polypeptide reads, in one-letter code: 3-methyl-2-oxobutanoate hydroxymethyltransferase (277 aa).

D43 and D82 together coordinate Mg(2+). 3-methyl-2-oxobutanoate contacts are provided by residues 43 to 44 (DS), D82, and K112. E114 is a Mg(2+) binding site. Residue E181 is the Proton acceptor of the active site.

The protein belongs to the PanB family. In terms of assembly, homodecamer; pentamer of dimers. It depends on Mg(2+) as a cofactor.

It is found in the cytoplasm. It catalyses the reaction 3-methyl-2-oxobutanoate + (6R)-5,10-methylene-5,6,7,8-tetrahydrofolate + H2O = 2-dehydropantoate + (6S)-5,6,7,8-tetrahydrofolate. It participates in cofactor biosynthesis; (R)-pantothenate biosynthesis; (R)-pantoate from 3-methyl-2-oxobutanoate: step 1/2. Its function is as follows. Catalyzes the reversible reaction in which hydroxymethyl group from 5,10-methylenetetrahydrofolate is transferred onto alpha-ketoisovalerate to form ketopantoate. This chain is 3-methyl-2-oxobutanoate hydroxymethyltransferase, found in Bacillus licheniformis (strain ATCC 14580 / DSM 13 / JCM 2505 / CCUG 7422 / NBRC 12200 / NCIMB 9375 / NCTC 10341 / NRRL NRS-1264 / Gibson 46).